Reading from the N-terminus, the 580-residue chain is Micronemal protein 4 (580 aa).

The N-terminal stretch at Met-1–Ala-25 is a signal peptide. 6 consecutive Apple domains span residues Cys-68 to Cys-137, Cys-141 to Cys-214, Cys-232 to Cys-301, Cys-305 to Gly-375, Cys-419 to Cys-488, and Cys-492 to Cys-565. 15 disulfides stabilise this stretch: Cys-68/Cys-137, Cys-93/Cys-115, Cys-97/Cys-103, Cys-141/Cys-214, Cys-166/Cys-188, Cys-170/Cys-176, Cys-232/Cys-301, Cys-257/Cys-279, Cys-261/Cys-267, Cys-305/Cys-380, Cys-332/Cys-354, Cys-336/Cys-342, Cys-419/Cys-488, Cys-444/Cys-466, and Cys-448/Cys-454.

In terms of assembly, monomer. Part of the MIC6-MIC1-MIC4 complex. Interacts (via the second apple domain) directly with MIC1 (via the beta-finger region). Interacts with murine TLR2; the interaction promotes activation of bone marrow-derived dendritic cells and macrophages in the host. Interacts with murine TLR4; the interaction promotes activation of bone marrow-derived dendritic cells and macrophages in the host. Proteolytically cleaved at the N- and C-terminus after release from the microneme.

The protein localises to the cytoplasmic vesicle. Its subcellular location is the secretory vesicle. The protein resides in the microneme. It localises to the host early endosome. Lacto-N-biose inhibits binding to asialofetuin, a host glycoprotein. Soluble adhesin with carbohydrate-binding activity. Binds to galactose-terminating oligosaccharides. Required for attachment of the parasite to the host cell prior to invasion. Triggers the activation of murine bone marrow-derived dendritic cells and macrophages and production of pro-inflammatory cytokines, such as IL12 (IL12B/IL12A), in host TLR2/TLR4-dependent manner. Triggers the production of anti-inflammatory cytokine IL10 in murine bone marrow-derived macrophages in host TLR4-dependent manner. Induces transient endotoxin tolerance in murine bone marrow-derived macrophages, manifested by reduced TNF-alpha (TNF) production in response to challenge with lipopolysaccharides (LPS). In Toxoplasma gondii, this protein is Micronemal protein 4.